The sequence spans 529 residues: Bifunctional purine biosynthesis protein PurH (529 aa).

Positions 1–148 (MTNRNVIKNV…KNYKNVLVVT (148 aa)) constitute an MGS-like domain.

This sequence belongs to the PurH family.

It carries out the reaction (6R)-10-formyltetrahydrofolate + 5-amino-1-(5-phospho-beta-D-ribosyl)imidazole-4-carboxamide = 5-formamido-1-(5-phospho-D-ribosyl)imidazole-4-carboxamide + (6S)-5,6,7,8-tetrahydrofolate. The catalysed reaction is IMP + H2O = 5-formamido-1-(5-phospho-D-ribosyl)imidazole-4-carboxamide. It functions in the pathway purine metabolism; IMP biosynthesis via de novo pathway; 5-formamido-1-(5-phospho-D-ribosyl)imidazole-4-carboxamide from 5-amino-1-(5-phospho-D-ribosyl)imidazole-4-carboxamide (10-formyl THF route): step 1/1. The protein operates within purine metabolism; IMP biosynthesis via de novo pathway; IMP from 5-formamido-1-(5-phospho-D-ribosyl)imidazole-4-carboxamide: step 1/1. This Buchnera aphidicola subsp. Baizongia pistaciae (strain Bp) protein is Bifunctional purine biosynthesis protein PurH.